Consider the following 185-residue polypeptide: MVKCTPLLALTVIVSAGSDALSDPTVKRLAKLATINQAPATQSNSDSKRVLRASDVPDEVAAGESRSPKSLWPWEVEDKLAPLKEKLISTSADDLEAGGSANKNALPMIWRWLWQNQIETKKTPIDEISKEVQTAMDLISSQATHEELNKAGVSVSDYVKALRFTLSDIDVVNRGMEYNIHLGNK.

Residues 1–20 (MVKCTPLLALTVIVSAGSDA) form the signal peptide. A RxLR-dEER motif is present at residues 49–66 (RVLRASDVPDEVAAGESR).

It belongs to the RxLR effector family.

Its subcellular location is the secreted. It localises to the host cell. Its function is as follows. Secreted effector that acts as an elicitor of hypersensitive response (HR) specifically on plants carrying defense protein RPP39. The allele ATR39-1 is recognized by RPP39, whereas the ATR39-2 allele is not recognized. In Hyaloperonospora arabidopsidis (strain Emoy2) (Downy mildew agent), this protein is Avirulence protein ATR39-1.